We begin with the raw amino-acid sequence, 169 residues long: Large ribosomal subunit protein uL10 (169 aa).

The protein belongs to the universal ribosomal protein uL10 family. In terms of assembly, part of the ribosomal stalk of the 50S ribosomal subunit. The N-terminus interacts with L11 and the large rRNA to form the base of the stalk. The C-terminus forms an elongated spine to which L12 dimers bind in a sequential fashion forming a multimeric L10(L12)X complex.

Its function is as follows. Forms part of the ribosomal stalk, playing a central role in the interaction of the ribosome with GTP-bound translation factors. The polypeptide is Large ribosomal subunit protein uL10 (Lactobacillus delbrueckii subsp. bulgaricus (strain ATCC 11842 / DSM 20081 / BCRC 10696 / JCM 1002 / NBRC 13953 / NCIMB 11778 / NCTC 12712 / WDCM 00102 / Lb 14)).